The primary structure comprises 1142 residues: MEFSVKNKNLLIQNLVEIQQQSFNELLCVGLKRQLLQLNFIENKTRNIKLIFHAKNYKFILPEITPKEAVLKSKTFASALFIPVEYRAKNSIGLYWVLLGHLPFMTKRGHFIINGVPRVVLNQMVRSPGLYYKTTANPQNVSNQVSINDSSHTSPVFYSDIIPNRGTWLRLEIDRKKNIWIRMKRVDKIPMMLFLQALGYDLHCIEKLLYSRKFLNCDYLLNTDHPADSNSALKKIKVEIEQQKVLKLAALEALDDDDPDIAKQLDYIEKTTTPEMGKDFLFQSFFNPASYDLSPIGRFQLNKKLNLSIPSDYTVLTEFDIYFATKELIKRATTMSNSDDIDHLQTRRIRSCGELLEIQLGEGIERLQKTIIDKINNTNLKKFAKHSSTYKRGTSSSIYRQDRQVINTDKNSKFLKNNLPTKFNRITLEPNLLPNGTSFIHKNNKLNQVSSNKLKLLSKKLIYLNLLINQKFIIAKLKSANLLANKSSFDKFLIHLVDESPRQKFVKNKTGLYHKFIPTPEIYIVEPNLNLVDMKSQQKFNLLKMDLYKVGLAESFLKSNLNNLNIYLQMCLRKPNTYFRDISKICSAQITQQLKQKSFLKLLLINPRLISQNNLLVLNRAVNFLKKIQFNLKDSPNLNDYQNFEINKLKAHIFKCQIKTQNNLTCCKYIYIKTKFNYINLPIKQFFFTKRFLITEQKLLLGGKFINSNLALTSLLKLHKFSEVVSNSFLIYNANNPNPNPTSIMSMIRPVNKSEIYRQLNRRFVRSRLQLNVLKSELTNSHSQLIKANNDPIDRELSIQILKQDVQKSNPFNKKGIYNQRFINKKFLDTSQFIDQELLHFLKTHKIFLDRQLTSLKTKQQNEKLKFIKWKKLRNFKNALKNPIQNLITTNAINGALQELFGLNPLSQFMDQINPLSEITHKRRISSMGPGGVNRDNASMDVRSIHPTHYGRICPIETPEGHNAGLVNSPTIYARINNYGFLETPFFKVNSGQIQAKAFYLNAQKEQKFKVSPPDLSCSELQFLPLGPTKIESEVPMRKDFKFQRMAATQIEFIGISPLQMISVATSLIPFLEHDDANRALMGSNMQRQAVPLLIAERPVVGTGLEGRVIADSSYIMQTKQSGVISYVSNEQVIVQTFHLNN.

Belongs to the RNA polymerase beta chain family. As to quaternary structure, in plastids the minimal PEP RNA polymerase catalytic core is composed of four subunits: alpha, beta, beta', and beta''. When a (nuclear-encoded) sigma factor is associated with the core the holoenzyme is formed, which can initiate transcription.

The protein resides in the plastid. The protein localises to the chloroplast. The enzyme catalyses RNA(n) + a ribonucleoside 5'-triphosphate = RNA(n+1) + diphosphate. Functionally, DNA-dependent RNA polymerase catalyzes the transcription of DNA into RNA using the four ribonucleoside triphosphates as substrates. The protein is DNA-directed RNA polymerase subunit beta N-terminal section (rpoB1) of Pleurastrum terricola (Filamentous green alga).